The sequence spans 158 residues: Transcriptional repressor NrdR (158 aa).

A zinc finger spans residues 3-34 (CPYCGYPDSRVIDSRPTDDNTAIRRRRECLKC). An ATP-cone domain is found at 49–139 (ILVIKKDNRR…VYRQFKDINT (91 aa)).

This sequence belongs to the NrdR family. Zn(2+) is required as a cofactor.

Negatively regulates transcription of bacterial ribonucleotide reductase nrd genes and operons by binding to NrdR-boxes. This Caldanaerobacter subterraneus subsp. tengcongensis (strain DSM 15242 / JCM 11007 / NBRC 100824 / MB4) (Thermoanaerobacter tengcongensis) protein is Transcriptional repressor NrdR.